Reading from the N-terminus, the 745-residue chain is uncharacterized protein (745 aa).

An HTH araC/xylS-type domain is found at 158–256; sequence NQVCDYIELH…HQTPKQYRGD (99 aa). 2 consecutive DNA-binding regions (H-T-H motif) follow at residues 175–196 and 223–246; these read SELSEYVGWSESHLSKKFAESL and ITDIALQNGFSSAASFARTFKHFT.

This is an uncharacterized protein from Staphylococcus aureus (strain MRSA252).